A 209-amino-acid polypeptide reads, in one-letter code: Immunoglobulin lambda-like polypeptide 1 (209 aa).

The signal sequence occupies residues 1 to 30 (MKLRVGQTLGTIPRQCEVLLLLLLLGLVDG). A j region region spans residues 93–104 (VFGGGTQLTILG). Positions 105-209 (QPKSDPLVTL…EKSVSPAECS (105 aa)) are c region. The Ig-like C1-type domain occupies 110-204 (PLVTLFLPSL…EGNTVEKSVS (95 aa)). Residues C131 and C190 are joined by a disulfide bond.

As to quaternary structure, interacts with VPREB1A. Interacts with SYNV1/HRD1 (via N-terminus); this interaction leads to increased IGLL1 ubiquitination and degradation in pre-B cells, possibly through a lysosomal, not proteasomal, pathway. Selectively expressed in pre-B lymphocytes.

The protein localises to the endoplasmic reticulum. Its subcellular location is the secreted. In terms of biological role, critical for B-cell development. This Mus musculus (Mouse) protein is Immunoglobulin lambda-like polypeptide 1 (Igll1).